A 247-amino-acid chain; its full sequence is Cell division protein ZapD (247 aa).

It belongs to the ZapD family. Interacts with FtsZ.

The protein resides in the cytoplasm. Its function is as follows. Cell division factor that enhances FtsZ-ring assembly. Directly interacts with FtsZ and promotes bundling of FtsZ protofilaments, with a reduction in FtsZ GTPase activity. This is Cell division protein ZapD from Klebsiella pneumoniae subsp. pneumoniae (strain ATCC 700721 / MGH 78578).